A 247-amino-acid chain; its full sequence is MNILSCSTNILNGFYDISGVEVGQHFYWKIGGFQVHGQVLITSWVVIAILLGSAALAVRKPQTIPTGIQNFFEYVLEFIRDVSKTQIGEEYGPWVPFIGTIFLFIFVSNWSGALLPWKIIQLPHGELAAPTNDINTTVALALLTSVAYFYAGLAKKGLGYFGKYIQPTPILLPINILEDFTKPLSLSFRLFGNILADELVVVVLVSLVPSVVPIPVMFLGLFTSGIQALIFATLAAAYIGESMEGHH.

The next 5 helical transmembrane spans lie at 38–58, 95–115, 134–154, 199–219, and 220–240; these read QVLI…ALAV, VPFI…GALL, INTT…AGLA, LVVV…VMFL, and GLFT…AYIG.

Belongs to the ATPase A chain family. F-type ATPases have 2 components, CF(1) - the catalytic core - and CF(0) - the membrane proton channel. CF(1) has five subunits: alpha(3), beta(3), gamma(1), delta(1), epsilon(1). CF(0) has four main subunits: a, b, b' and c.

The protein resides in the plastid. It localises to the chloroplast thylakoid membrane. In terms of biological role, key component of the proton channel; it plays a direct role in the translocation of protons across the membrane. This chain is ATP synthase subunit a, chloroplastic, found in Trachelium caeruleum (Blue throatwort).